The following is a 264-amino-acid chain: ATP synthase subunit a (264 aa).

6 consecutive transmembrane segments (helical) span residues Thr-29–Phe-49, Asn-87–Met-107, Asp-134–Ile-154, Ile-177–Leu-197, Leu-208–Val-228, and Leu-235–Val-255.

This sequence belongs to the ATPase A chain family. As to quaternary structure, F-type ATPases have 2 components, CF(1) - the catalytic core - and CF(0) - the membrane proton channel. CF(1) has five subunits: alpha(3), beta(3), gamma(1), delta(1), epsilon(1). CF(0) has three main subunits: a(1), b(2) and c(9-12). The alpha and beta chains form an alternating ring which encloses part of the gamma chain. CF(1) is attached to CF(0) by a central stalk formed by the gamma and epsilon chains, while a peripheral stalk is formed by the delta and b chains.

The protein localises to the cell inner membrane. In terms of biological role, key component of the proton channel; it plays a direct role in the translocation of protons across the membrane. The protein is ATP synthase subunit a of Shewanella amazonensis (strain ATCC BAA-1098 / SB2B).